A 549-amino-acid chain; its full sequence is Arginine--tRNA ligase (549 aa).

A 'HIGH' region motif is present at residues 132 to 142; the sequence is ANPTGPLHIGH.

This sequence belongs to the class-I aminoacyl-tRNA synthetase family. Monomer.

The protein resides in the cytoplasm. It catalyses the reaction tRNA(Arg) + L-arginine + ATP = L-arginyl-tRNA(Arg) + AMP + diphosphate. The sequence is that of Arginine--tRNA ligase from Paenarthrobacter aurescens (strain TC1).